Here is a 23-residue protein sequence, read N- to C-terminus: 48 kDa cell wall protein (23 aa).

The protein resides in the secreted. Its subcellular location is the cell wall. This Nicotiana tabacum (Common tobacco) protein is 48 kDa cell wall protein.